The sequence spans 358 residues: Alanine racemase (358 aa).

The active-site Proton acceptor; specific for D-alanine is the Lys-34. Lys-34 carries the post-translational modification N6-(pyridoxal phosphate)lysine. Arg-130 serves as a coordination point for substrate. Tyr-254 functions as the Proton acceptor; specific for L-alanine in the catalytic mechanism. Substrate is bound at residue Met-302.

The protein belongs to the alanine racemase family. Requires pyridoxal 5'-phosphate as cofactor.

It carries out the reaction L-alanine = D-alanine. It functions in the pathway amino-acid biosynthesis; D-alanine biosynthesis; D-alanine from L-alanine: step 1/1. Its function is as follows. Catalyzes the interconversion of L-alanine and D-alanine. May also act on other amino acids. This Stutzerimonas stutzeri (strain A1501) (Pseudomonas stutzeri) protein is Alanine racemase (alr).